Here is a 2382-residue protein sequence, read N- to C-terminus: Highly reducing polyketide synthase srdA (2382 aa).

Residues 1-25 (MAPHSTLDSDYSSGSSTPTSASAAG) are disordered. The Ketosynthase family 3 (KS3) domain maps to 44-474 (QEPIAIIGMG…GANAHAILEA (431 aa)). Active-site for beta-ketoacyl synthase activity residues include cysteine 217, histidine 352, and histidine 390. The interval 580-891 (VFTGQGAQWP…HYGSALSRGK (312 aa)) is malonyl-CoA:ACP transacylase (MAT) domain. The active-site For malonyltransferase activity is the serine 672. Residues 971–1108 (HDLLGSQVHG…GLVKIDSAPA (138 aa)) form an N-terminal hotdog fold region. Residues 971–1274 (HDLLGSQVHG…RQVSYQSGIQ (304 aa)) form a dehydratase (DH) domain region. One can recognise a PKS/mFAS DH domain in the interval 971 to 1275 (HDLLGSQVHG…QVSYQSGIQQ (305 aa)). Histidine 1003 (proton acceptor; for dehydratase activity) is an active-site residue. Residues 1121-1275 (MEPQAPRTWY…QVSYQSGIQQ (155 aa)) are C-terminal hotdog fold. Aspartate 1189 functions as the Proton donor; for dehydratase activity in the catalytic mechanism. Residues 1668-1979 (GQIDSIFFRR…AKGHSGSVVV (312 aa)) are enoyl reductase (ER) domain. The interval 2004 to 2180 (SYLLVGCLGG…ATSIGLGMIS (177 aa)) is ketoreductase (KR) domain. Residues 2298-2376 (SVEDAVLKMI…LLSELITKKM (79 aa)) form the Carrier domain. An O-(pantetheine 4'-phosphoryl)serine modification is found at serine 2335.

Highly reducing polyketide synthase; part of the gene cluster that mediates the biosynthesis of sordarial, a salicylic aldehyde structurally related to the phytotoxin pyriculol. The most interesting aspect of this pathway is formation of an aromatic product from the highly reducing polyketide synthase srdA. SrdA synthesizes a reduced polyketide chain from one molecule of acetyl-CoA and five molecules of malonyl-CoA. The polyketide chain is then reductively released as an aldehyde. The oxidoreductases srdC, srdD and srdE then oxidize one of the hydroxy groups to facilitate the intramolecular aldol condensation, followed by dehydration to yield a salicylic aldehyde. This aldehyde can undergo facile reduction by endogenous reductases to yield the alcohol 1-hydroxy-2-hydroxymethyl-3-pent-1,3-dienylbenzene. The flavin-dependent srdI counteract against the propensity of the aldehydes to be reduced under physiological conditions and is responsible for reoxidizing 1-hydroxy-2-hydroxymethyl-3-pent-1,3-dienylbenzene back to the salicylic aldehyde. This salicylic aldehyde is then selectively epoxidized by the cupin-domain-containing oxidoreductase srdB to yield the epoxide, which can be hydrolyzed stereoselectively by the hydrolase srdG to give the final product sordarial. The protein is Highly reducing polyketide synthase srdA of Neurospora crassa (strain ATCC 24698 / 74-OR23-1A / CBS 708.71 / DSM 1257 / FGSC 987).